The following is a 1242-amino-acid chain: Structural polyprotein (1242 aa).

Residues 1 to 36 (MFPYPTLNYPPMAPVNPMAYRDPNPPRRRWRPFRPP) are necessary for nucleocapsid assembly and virus assembly. The segment at 1-104 (MFPYPTLNYP…KQKPGKRQRM (104 aa)) is disordered. Residues 37–70 (LAAQIEDLRRSIANLTFKQRAPNPPAGPPAKRKK) are host transcription inhibition. A Supraphysiological nuclear export signal motif is present at residues 44–51 (LRRSIANL). Residues 66 to 104 (AKRKKPAPKPKPAAPKKKRQPPPAKKQKRKQKPGKRQRM) are compositionally biased toward basic residues. Positions 67–70 (KRKK) match the Nuclear localization signal motif. The binding to the viral RNA stretch occupies residues 83-113 (KRQPPPAKKQKRKQKPGKRQRMCMKLESDKT). Residues 98–112 (PGKRQRMCMKLESDK) are ribosome-binding. Ser-110 is modified (phosphoserine). One can recognise a Peptidase S3 domain in the interval 112-261 (KTFPIMLNGQ…KDTPEGSEPW (150 aa)). Phosphothreonine is present on Thr-113. Catalysis depends on charge relay system residues His-138, Asp-160, and Ser-212. A functions as an uncleaved signal peptide for the precursor of protein E3/E2 region spans residues 262-273 (SLTTVMCVLANI). A glycan (N-linked (GlcNAc...) asparagine; by host) is linked at Asn-272. Topologically, residues 325–688 (DLETHFTQYK…YYYNRYPMTT (364 aa)) are extracellular. Residues 689 to 709 (VIGLCTCVAIIMVSCVTSVWL) traverse the membrane as a helical segment. Topologically, residues 710–744 (LCRTRNLCITPYRLAPNAQVPILLAVLCCVKPTRA) are cytoplasmic. S-palmitoyl cysteine; by host attachment occurs at residues Cys-717, Cys-737, and Cys-738. The interval 717–737 (CITPYRLAPNAQVPILLAVLC) is transient transmembrane before p62-6K protein processing. The Extracellular portion of the chain corresponds to 745 to 759 (DDTLQVLNYLWNNNQ). 2 helical membrane-spanning segments follow: residues 760–780 (NFFW…MRML) and 781–801 (RCLL…GAAA). Residues 802-1218 (YEHAAVMPNK…WSWLKVLVGS (417 aa)) lie on the Extracellular side of the membrane. Disulfide bonds link Cys-850-Cys-915, Cys-863-Cys-895, Cys-864-Cys-897, Cys-869-Cys-879, Cys-1061-Cys-1073, Cys-1103-Cys-1178, Cys-1108-Cys-1182, and Cys-1130-Cys-1172. Residues 885 to 902 (VYPFMWGGAYCFCDTENT) form an E1 fusion peptide loop region. A helical transmembrane segment spans residues 1219 to 1239 (TSAFIVLGLIATAVVALVLFT). Topologically, residues 1240 to 1242 (HRH) are cytoplasmic.

As to quaternary structure, part of a tetrameric complex composed of host CRM1, host importin alpha/beta dimer and the viral capsid; this complex blocks the receptor-mediated transport through the nuclear pore. Interacts with host phosphatase PPP1CA; this interaction dephosphorylates the capsid protein, which increases its ability to bind to the viral genome. Interacts with host karyopherin KPNA4; this interaction allows the nuclear import of the viral capsid protein. Interacts with spike glycoprotein E2. Interacts with host IRAK1; the interaction leads to inhibition of IRAK1-dependent signaling. In terms of assembly, the precursor of protein E3/E2 and E1 form a heterodimer shortly after synthesis. The precursor of protein E3/E2 and E1 form a heterodimer shortly after synthesis. Processing of the precursor of protein E3/E2 into E2 and E3 results in a heterodimer of the spike glycoproteins E2 and E1. Spike at virion surface are constituted of three E2-E1 heterodimers. After target cell attachment and endocytosis, E1 change conformation to form homotrimers. Interacts with 6K protein. As to quaternary structure, processing of the precursor of protein E3/E2 into E2 and E3 results in a heterodimer of the spike glycoproteins E2 and E1. Spike at virion surface are constituted of three E2-E1 heterodimers. Interacts with 6K protein. In terms of assembly, interacts with spike glycoprotein E1. Interacts with spike glycoprotein E2. Structural polyprotein: Specific enzymatic cleavages in vivo yield mature proteins. Capsid protein is auto-cleaved during polyprotein translation, unmasking a signal peptide at the N-terminus of the precursor of E3/E2. The remaining polyprotein is then targeted to the host endoplasmic reticulum, where host signal peptidase cleaves it into pE2, 6K and E1 proteins. pE2 is further processed to mature E3 and E2 by host furin in trans-Golgi vesicle. In terms of processing, phosphorylated on serine and threonine residues. Post-translationally, palmitoylated via thioester bonds. These palmitoylations may induce disruption of the C-terminus transmembrane. This would result in the reorientation of E2 C-terminus from lumenal to cytoplasmic side. N-glycosylated. In terms of processing, palmitoylated via thioester bonds.

It is found in the virion. The protein localises to the host cytoplasm. It localises to the host cell membrane. Its subcellular location is the host nucleus. The protein resides in the virion membrane. It carries out the reaction Autocatalytic release of the core protein from the N-terminus of the togavirus structural polyprotein by hydrolysis of a -Trp-|-Ser- bond.. Functionally, forms an icosahedral capsid with a T=4 symmetry composed of 240 copies of the capsid protein surrounded by a lipid membrane through which penetrate 80 spikes composed of trimers of E1-E2 heterodimers. The capsid protein binds to the viral RNA genome at a site adjacent to a ribosome binding site for viral genome translation following genome release. Possesses a protease activity that results in its autocatalytic cleavage from the nascent structural protein. Following its self-cleavage, the capsid protein transiently associates with ribosomes, and within several minutes the protein binds to viral RNA and rapidly assembles into icosahedric core particles. The resulting nucleocapsid eventually associates with the cytoplasmic domain of the spike glycoprotein E2 at the cell membrane, leading to budding and formation of mature virions. In case of infection, new virions attach to target cells and after clathrin-mediated endocytosis their membrane fuses with the host endosomal membrane. This leads to the release of the nucleocapsid into the cytoplasm, followed by an uncoating event necessary for the genomic RNA to become accessible. The uncoating might be triggered by the interaction of capsid proteins with ribosomes. Binding of ribosomes would release the genomic RNA since the same region is genomic RNA-binding and ribosome-binding. Specifically inhibits interleukin-1 receptor-associated kinase 1/IRAK1-dependent signaling during viral entry, representing a means by which the alphaviruses may evade innate immune detection and activation prior to viral gene expression. Inhibits host transcription. Forms a tetrameric complex with XPO1/CRM1 and the nuclear import receptor importin. This complex blocks the central channel of host nuclear pores thereby inhibiting the receptor-mediated nuclear transport and thus the host mRNA and rRNA transcription. The inhibition of transcription is linked to a cytopathic effect on the host cell. In terms of biological role, provides the signal sequence for the translocation of the precursor of protein E3/E2 to the host endoplasmic reticulum. Furin-cleaved E3 remains associated with spike glycoprotein E1 and mediates pH protection of the latter during the transport via the secretory pathway. After virion release from the host cell, the assembly protein E3 is gradually released in the extracellular space. Its function is as follows. Plays a role in viral attachment to target host cell, by binding to the cell receptor. Synthesized as a p62 precursor which is processed by furin at the cell membrane just before virion budding, giving rise to E2-E1 heterodimer. The p62-E1 heterodimer is stable, whereas E2-E1 is unstable and dissociate at low pH. p62 is processed at the last step, presumably to avoid E1 fusion activation before its final export to cell surface. E2 C-terminus contains a transitory transmembrane that would be disrupted by palmitoylation, resulting in reorientation of the C-terminal tail from lumenal to cytoplasmic side. This step is critical since E2 C-terminus is involved in budding by interacting with capsid proteins. This release of E2 C-terminus in cytoplasm occurs lately in protein export, and precludes premature assembly of particles at the endoplasmic reticulum membrane. Constitutive membrane protein involved in virus glycoprotein processing, cell permeabilization, and the budding of viral particles. Disrupts the calcium homeostasis of the cell, probably at the endoplasmic reticulum level. This leads to cytoplasmic calcium elevation. Because of its lipophilic properties, the 6K protein is postulated to influence the selection of lipids that interact with the transmembrane domains of the glycoproteins, which, in turn, affects the deformability of the bilayer required for the extreme curvature that occurs as budding proceeds. Present in low amount in virions, about 3% compared to viral glycoproteins. Functionally, class II viral fusion protein. Fusion activity is inactive as long as E1 is bound to E2 in mature virion. After virus attachment to target cell and endocytosis, acidification of the endosome would induce dissociation of E1/E2 heterodimer and concomitant trimerization of the E1 subunits. This E1 trimer is fusion active, and promotes release of viral nucleocapsid in cytoplasm after endosome and viral membrane fusion. Efficient fusion requires the presence of cholesterol and sphingolipid in the target membrane. Fusion is optimal at levels of about 1 molecule of cholesterol per 2 molecules of phospholipids, and is specific for sterols containing a 3-beta-hydroxyl group. The sequence is that of Structural polyprotein from Aedes (Human).